The primary structure comprises 505 residues: Protein DETOXIFICATION 50 (505 aa).

12 helical membrane passes run 46 to 66, 78 to 98, 121 to 141, 155 to 175, 194 to 214, 219 to 239, 275 to 295, 305 to 325, 344 to 364, 380 to 400, 424 to 444, and 446 to 466; these read LVLTGLFLYVRSFVSLSFLGG, AAAFANITGYSLFSGLTMGVE, IILLLVTSLPVTLLWMNMEKI, AHIFLLYSVPDLVAQSFLHPL, IASFLHLPITFFLVSYLGLGI, LSGVVSNFNLVAFLFLYICFF, ISVCLEWWCYEIMILLCGFLL, GILIQITSLVYIFPHSLSLGV, AAIVGLGLSIALGFTAFAFTV, IMKLTAMALPIVGLCELGNCP, AFYAVGIPVGAVLAFWFGFGF, and GLWLGMLAAQITCVIGMMAAT.

This sequence belongs to the multi antimicrobial extrusion (MATE) (TC 2.A.66.1) family. In terms of tissue distribution, preferentially expressed in rosette leaves. Detected mainly in the vascular tissues and guard cells. Mostly detected at reproductive stages in young anthers, in mature pollens and during pollen germination on the pistil. Also expressed in developing seeds.

Its subcellular location is the cell membrane. It localises to the late endosome membrane. Functionally, functions as a multidrug and toxin extrusion transporter in the export of abscisic acid (ABA) in guard cells. Plays a role in ABA-mediated growth inhibition and responses to drought conditions. May act as a negative regulator of hypocotyl cell elongation in the light. This chain is Protein DETOXIFICATION 50, found in Arabidopsis thaliana (Mouse-ear cress).